A 599-amino-acid polypeptide reads, in one-letter code: Adenine deaminase (599 aa).

The protein belongs to the metallo-dependent hydrolases superfamily. Adenine deaminase family. Requires Mn(2+) as cofactor.

It catalyses the reaction adenine + H2O + H(+) = hypoxanthine + NH4(+). This Clostridium botulinum (strain Loch Maree / Type A3) protein is Adenine deaminase.